A 139-amino-acid polypeptide reads, in one-letter code: Actin-depolymerizing factor 2 (139 aa).

The ADF-H domain maps to 7-139 (GLAVSDECKV…SLDIVKSRTN (133 aa)).

It belongs to the actin-binding proteins ADF family. As to expression, expressed in pollen.

In terms of biological role, actin-depolymerizing protein. Severs actin filaments (F-actin) and binds to actin monomers. The sequence is that of Actin-depolymerizing factor 2 (ADF2) from Zea mays (Maize).